Consider the following 1094-residue polypeptide: Probable arabinosyltransferase C (1094 aa).

A run of 13 helical transmembrane segments spans residues 28-50, 232-251, 264-286, 341-360, 373-392, 431-453, 466-488, 530-552, 565-582, 586-608, 620-642, 657-679, and 700-722; these read IARYVAVVAGLLGAVLAIATPLL, AAMILGVALTGAALVALHIL, PARWWSTGGLDTLVIAVLVWWHF, SIWMRLPTLAMALTCWWVIS, TSRAAAWTAAGMFLAVWLPL, IGALTLFSGPTGIASIGALLVAI, RFGVLPLVAPILAAATVTAIPIF, SIARRFAVLALVLALAVSVAMSL, SRRIIGITIISFLAMMFT, WTHHFGVFAGLAGSLGALAAVAV, TVFAAVVVFVLALSFASVNGWWY, WRWSLTTALLELTVLVLLLAAWF, and LAGIVQSPLAIATWLLVLFEVVS. The span at 817-831 shows a compositional bias: low complexity; it reads GSEPGTEGGTTAAPG. Positions 817-836 are disordered; that stretch reads GSEPGTEGGTTAAPGINGSR.

It belongs to the emb family.

The protein resides in the cell membrane. Arabinosyl transferase responsible for the polymerization of arabinose into the arabinan of arabinogalactan. This Mycobacterium tuberculosis (strain ATCC 25618 / H37Rv) protein is Probable arabinosyltransferase C (embC).